The chain runs to 114 residues: Chaperone protein YscY (114 aa).

As to quaternary structure, binds to YscX.

Its subcellular location is the cytoplasm. In terms of biological role, required for Yop secretion. Functions probably as a chaperone which stabilizes YscX within the cell, before its secretion. In Yersinia enterocolitica, this protein is Chaperone protein YscY (yscY).